A 507-amino-acid polypeptide reads, in one-letter code: Putative histone deacetylase 2 (507 aa).

Positions 29-342 (RNVAYYYHKD…WALETGVILG (314 aa)) are histone deacetylase. Residue His-162 is part of the active site. The segment at 444–507 (EECFVEEDSK…RKDLNIPGIP (64 aa)) is disordered. Residues 482-501 (SHSDVIEEAKYEDRDRRKDL) are compositionally biased toward basic and acidic residues.

It belongs to the histone deacetylase family. HD type 1 subfamily. In terms of assembly, may be a component of a histone deacetylase complex containing saeg-2, saeg-1 and hda-2.

The protein resides in the nucleus. The enzyme catalyses N(6)-acetyl-L-lysyl-[histone] + H2O = L-lysyl-[histone] + acetate. Functionally, probably responsible for the deacetylation of lysine residues on the N-terminal part of the core histones (H2A, H2B, H3 and H4). Histone deacetylation gives a tag for epigenetic repression and plays an important role in transcriptional regulation, cell cycle progression and developmental events. Histone deacetylases act via the formation of large multiprotein complexes. As a likely component of a histone deacetylase complex, together with saeg-1 and hda-2, functions downstream of the cAMP-dependent kinase egl-4 to regulate the expression of genes required for egg-laying and forgaging. This is Putative histone deacetylase 2 (hda-2) from Caenorhabditis elegans.